The sequence spans 246 residues: U2 small nuclear ribonucleoprotein A' (246 aa).

4 LRR repeats span residues 19-40 (RDRE…GVTR), 42-63 (QNDA…PLLQ), 64-85 (QLKT…IGHS), and 88-109 (ALHS…VHLS). Residues 122–160 (TPASREAQYREFVIWKLPQVRVLDYQRIKDKERARAKDL) enclose the LRRCT domain.

It belongs to the U2 small nuclear ribonucleoprotein A family. As to quaternary structure, associated with the spliceosome.

It localises to the nucleus. In terms of biological role, involved in pre-mRNA splicing. This is U2 small nuclear ribonucleoprotein A' (LEA1) from Mycosarcoma maydis (Corn smut fungus).